The chain runs to 883 residues: Phosphoenolpyruvate carboxylase (883 aa).

Residues His-138 and Lys-546 contribute to the active site.

The protein belongs to the PEPCase type 1 family. Mg(2+) is required as a cofactor.

The catalysed reaction is oxaloacetate + phosphate = phosphoenolpyruvate + hydrogencarbonate. Functionally, forms oxaloacetate, a four-carbon dicarboxylic acid source for the tricarboxylic acid cycle. The protein is Phosphoenolpyruvate carboxylase of Escherichia coli (strain 55989 / EAEC).